Reading from the N-terminus, the 128-residue chain is Glycine cleavage system H protein (128 aa).

Residues 23-105 (KVRIGITDFA…YEKAWMIVVE (83 aa)) enclose the Lipoyl-binding domain. Lysine 64 carries the N6-lipoyllysine modification.

This sequence belongs to the GcvH family. As to quaternary structure, the glycine cleavage system is composed of four proteins: P, T, L and H. The cofactor is (R)-lipoate.

In terms of biological role, the glycine cleavage system catalyzes the degradation of glycine. The H protein shuttles the methylamine group of glycine from the P protein to the T protein. Functionally, is also involved in protein lipoylation via its role as an octanoyl/lipoyl carrier protein intermediate. The sequence is that of Glycine cleavage system H protein from Halalkalibacterium halodurans (strain ATCC BAA-125 / DSM 18197 / FERM 7344 / JCM 9153 / C-125) (Bacillus halodurans).